A 156-amino-acid chain; its full sequence is Ribosomal RNA large subunit methyltransferase H (156 aa).

Residues Leu-73, Gly-104, and Leu-123–Leu-128 each bind S-adenosyl-L-methionine.

The protein belongs to the RNA methyltransferase RlmH family. In terms of assembly, homodimer.

The protein resides in the cytoplasm. The enzyme catalyses pseudouridine(1915) in 23S rRNA + S-adenosyl-L-methionine = N(3)-methylpseudouridine(1915) in 23S rRNA + S-adenosyl-L-homocysteine + H(+). Specifically methylates the pseudouridine at position 1915 (m3Psi1915) in 23S rRNA. In Shewanella oneidensis (strain ATCC 700550 / JCM 31522 / CIP 106686 / LMG 19005 / NCIMB 14063 / MR-1), this protein is Ribosomal RNA large subunit methyltransferase H.